Consider the following 1274-residue polypeptide: Paired amphipathic helix protein Sin3a (1274 aa).

Disordered stretches follow at residues 1–26 and 85–110; these read MKRR…STEA and HHHP…PPVA. The residue at position 10 (S10) is a Phosphoserine. The 71-residue stretch at 119–189 folds into the PAH 1 domain; that stretch reads QRLKVEDALS…MGFNTFLPPG (71 aa). The segment at 119 to 196 is interaction with HCFC1; that stretch reads QRLKVEDALS…PPGYKIEVQT (78 aa). Residues K122 and K134 each participate in a glycyl lysine isopeptide (Lys-Gly) (interchain with G-Cter in SUMO2) cross-link. The tract at residues 205 to 297 is disordered; sequence PGQVHQIPTH…ISLGTAPSLQ (93 aa). The interaction with REST stretch occupies residues 205-479; it reads PGQVHQIPTH…KVRKALRSAE (275 aa). Residues 228–237 are compositionally biased toward low complexity; sequence SQPSSQSAPT. The span at 252 to 266 shows a compositional bias: polar residues; it reads KPSQLQAHTPASQQT. The segment covering 267–282 has biased composition (pro residues); it reads PPLPPYASPRSPPVQP. S277 carries the phosphoserine modification. At T284 the chain carries Phosphothreonine. Positions 284-297 are enriched in polar residues; sequence TPVTISLGTAPSLQ. A PAH 2 domain is found at 300–383; it reads QPVEFNHAIN…SEFGQFLPDA (84 aa). The segment at 398-443 is disordered; sequence DSVRNDHGGTVKKPQLNNKPQRPSQNGCQIRRHSGTGATPPVKKKP. Residues 412–425 show a composition bias toward polar residues; that stretch reads QLNNKPQRPSQNGC. Residues 457–526 enclose the PAH 3 domain; sequence SKHGVGTESL…NWFKNFLGYK (70 aa). Residues 459–526 are interaction with SAP30; that stretch reads HGVGTESLFF…NWFKNFLGYK (68 aa). K470 bears the N6-acetyllysine mark. Residues 524–851 form an interaction with NCOR1 region; that stretch reads GYKESVHLES…EMDVDEATGA (328 aa). Residues 525-660 form an interactions with SUDS3 and SAP130 region; it reads YKESVHLESF…KFRLDNTLGG (136 aa). A Glycyl lysine isopeptide (Lys-Gly) (interchain with G-Cter in SUMO2) cross-link involves residue K564. Positions 688–830 are interactions with HDAC1 and ARID4B; sequence NPSIAVPIVL…IPDLLFAQRG (143 aa). S833 is modified (phosphoserine). Positions 835–847 are enriched in acidic residues; that stretch reads VEEEEEEEMDVDE. Residues 835–865 are disordered; it reads VEEEEEEEMDVDEATGAPKKHNGVGGSPPKS. S861 bears the Phosphoserine mark. An N6-acetyllysine mark is found at K866 and K876. Positions 889–968 are interaction with OGT; that stretch reads VNNNWYIFMR…YYPAFLDMVR (80 aa). The stretch at 904–933 forms a coiled coil; the sequence is CLRLLRICSQAERQIEEENREREWEREVLG. Residues S941, S1090, and S1113 each carry the phosphoserine modification. Residues 1137 to 1157 are disordered; sequence CQRGREQQEKEGKEGNSKKTM. Basic and acidic residues predominate over residues 1139–1157; sequence RGREQQEKEGKEGNSKKTM.

Interacts with ARID4B, BRMS1L, HCFC1, HDAC1, HDAC2, MXI1, SAP30L, SAP130, SFPQ and TOPORS. Interacts with OGT (via TPRs 1-6); the interaction mediates transcriptional repression in parallel with histone deacetylase. Interacts with BAZ2A, MXD1, MXD3, MXD4, MBD2, DACH1, NCOR1, NR4A2, REST, RLIM, SAP30, SETDB1, SMYD2, and SUDS3. Interacts with PHF12 in a complex composed of HDAC1, PHF12 and SAP30. Interacts with TET1; the interaction recruits SIN3A to gene promoters. The large PER complex involved in the histone deacetylation is composed of at least HDAC1, PER2, SFPQ and SIN3A. Interacts with KLF11. Interacts with PPHLN1. Found in a complex with YY1, GON4L and HDAC1. Interacts (via PAH2) with FOXK1. Interacts with FOXK2. Found in a complex composed of at least SINHCAF, SIN3A, HDAC1, SAP30, RBBP4, OGT and TET1. Interacts with SINHCAF. Interacts with SPHK2. SUMO1 sumoylated by TOPORS. Probably desumoylated by SENP2. In terms of tissue distribution, widely expressed. Highest levels in testis, lung and thymus. Expressed at relatively high levels throughout brain development. In adult mice, expression is high in neurogenic regions such as the subventricular zone, rostral migratory stream, olfactory bulb and dentate gyrus.

It localises to the nucleus. Its subcellular location is the nucleolus. Functionally, acts as a transcriptional repressor. Corepressor for REST. Interacts with MXI1 to repress MYC responsive genes and antagonize MYC oncogenic activities. Also interacts with MXD1-MAX heterodimers to repress transcription by tethering SIN3A to DNA. Acts cooperatively with OGT to repress transcription in parallel with histone deacetylation. Involved in the control of the circadian rhythms. Required for the transcriptional repression of circadian target genes, such as PER1, mediated by the large PER complex through histone deacetylation. Cooperates with FOXK1 to regulate cell cycle progression probably by repressing cell cycle inhibitor genes expression. Required for cortical neuron differentiation and callosal axon elongation. This chain is Paired amphipathic helix protein Sin3a (Sin3a), found in Mus musculus (Mouse).